A 406-amino-acid polypeptide reads, in one-letter code: Tyrosine--tRNA ligase (406 aa).

Tyr-35 contacts L-tyrosine. The short motif at 40-49 (PTADSLHVGH) is the 'HIGH' region element. L-tyrosine contacts are provided by Tyr-168 and Gln-172. Residues 228–232 (KMGKT) carry the 'KMSKS' region motif. Residue Lys-231 coordinates ATP. The region spanning 340-404 (STVLDIIAKT…RGKKNYNKIE (65 aa)) is the S4 RNA-binding domain.

This sequence belongs to the class-I aminoacyl-tRNA synthetase family. TyrS type 1 subfamily. In terms of assembly, homodimer.

It is found in the cytoplasm. It carries out the reaction tRNA(Tyr) + L-tyrosine + ATP = L-tyrosyl-tRNA(Tyr) + AMP + diphosphate + H(+). In terms of biological role, catalyzes the attachment of tyrosine to tRNA(Tyr) in a two-step reaction: tyrosine is first activated by ATP to form Tyr-AMP and then transferred to the acceptor end of tRNA(Tyr). This is Tyrosine--tRNA ligase from Clostridium botulinum (strain Alaska E43 / Type E3).